The sequence spans 238 residues: tRNA (guanine-N(7)-)-methyltransferase (238 aa).

Positions 68, 93, 120, and 143 each coordinate S-adenosyl-L-methionine. The active site involves aspartate 143. Residues lysine 147, aspartate 179, and 216–219 each bind substrate; that span reads TKFE.

The protein belongs to the class I-like SAM-binding methyltransferase superfamily. TrmB family.

The catalysed reaction is guanosine(46) in tRNA + S-adenosyl-L-methionine = N(7)-methylguanosine(46) in tRNA + S-adenosyl-L-homocysteine. It participates in tRNA modification; N(7)-methylguanine-tRNA biosynthesis. In terms of biological role, catalyzes the formation of N(7)-methylguanine at position 46 (m7G46) in tRNA. This chain is tRNA (guanine-N(7)-)-methyltransferase, found in Stutzerimonas stutzeri (strain A1501) (Pseudomonas stutzeri).